Consider the following 338-residue polypeptide: Lipoate-protein ligase A (338 aa).

The 188-residue stretch at 29 to 216 folds into the BPL/LPL catalytic domain; it reads PATQRVLFLW…AFFAHYGERV (188 aa). Residues R71, 76-79, and K134 contribute to the ATP site; that span reads GAVF. K134 is a binding site for (R)-lipoate.

It belongs to the LplA family. Monomer.

It localises to the cytoplasm. It catalyses the reaction L-lysyl-[lipoyl-carrier protein] + (R)-lipoate + ATP = N(6)-[(R)-lipoyl]-L-lysyl-[lipoyl-carrier protein] + AMP + diphosphate + H(+). The protein operates within protein modification; protein lipoylation via exogenous pathway; protein N(6)-(lipoyl)lysine from lipoate: step 1/2. It participates in protein modification; protein lipoylation via exogenous pathway; protein N(6)-(lipoyl)lysine from lipoate: step 2/2. Catalyzes both the ATP-dependent activation of exogenously supplied lipoate to lipoyl-AMP and the transfer of the activated lipoyl onto the lipoyl domains of lipoate-dependent enzymes. In Salmonella typhimurium (strain LT2 / SGSC1412 / ATCC 700720), this protein is Lipoate-protein ligase A.